We begin with the raw amino-acid sequence, 130 residues long: RutC family protein slr0709 (130 aa).

It belongs to the RutC family.

This chain is RutC family protein slr0709, found in Synechocystis sp. (strain ATCC 27184 / PCC 6803 / Kazusa).